The sequence spans 128 residues: Ig kappa chain V-V region T1 (128 aa).

The first 20 residues, 1–20 (MRTPAQFLGILLLWFPGIKC), serve as a signal peptide directing secretion. The framework-1 stretch occupies residues 21–43 (DIKMTQSPSSMYASLGERVTISC). An intrachain disulfide couples Cys-43 to Cys-108. The segment at 44 to 54 (KASQDINSYLT) is complementarity-determining-1. Positions 55-69 (WFQQKPGKSPKTLLY) are framework-2. The segment at 70 to 76 (RANRLVD) is complementarity-determining-2. The interval 77–108 (GVPSRFSGSGSGQDFSLTISSLEYEDMGIYYC) is framework-3. The interval 109 to 117 (LQYDEFPLT) is complementarity-determining-3. The tract at residues 118–127 (FGAGTKLELK) is framework-4.

In Mus musculus (Mouse), this protein is Ig kappa chain V-V region T1.